The chain runs to 203 residues: Phosphatidylethanolamine N-methyltransferase (203 aa).

It catalyses the reaction a 1,2-diacyl-sn-glycero-3-phosphoethanolamine + S-adenosyl-L-methionine = a 1,2-diacyl-sn-glycero-3-phospho-N-methylethanolamine + S-adenosyl-L-homocysteine + H(+). Its pathway is phospholipid metabolism; phosphatidylcholine biosynthesis. Its function is as follows. This enzyme catalyzes three distinct methylation reactions for converting phosphatidylethanolamine to phosphatidylcholine. The polypeptide is Phosphatidylethanolamine N-methyltransferase (pmtA) (Cereibacter sphaeroides (Rhodobacter sphaeroides)).